The chain runs to 1056 residues: MLSVVENGLDPQAAIPVIKKKLVGSVKALQKQYVSLDTVVTSEDGDANTMCSALEAVFIHGLHAKHIRAEAGGKRKKSAHQKPLPQPVFWPLLKAVTHKHIISELEHLTFVNTDVGRCRAWLRLALNDGLMECYLKLLLQEQARLHEYYQPTALLRDAEEGEFLLSFLQGLTSLSFELSYKSAILNEWTLTPLALSGLCPLSELDPLSTSGAELQRKESLDSISHSSGSEDIEVHHSGHKIRRNQKLTASSLSLDTASSSQLSCSLNSDSCLLQENGSKSPDHCEEPMSCDSDLGTANAEDSDRSLQEVLLEFSKAQVNSVPTNGLSQETEIPTPQASLSLHGLNTSTYLHCEAPAEPLPAQAASGTQDGVHVQEPRPQAPSPLDLQQPVESTSGQQPSSTVSETAREVGQGNGLQKAQAHDGAGLKLVVSSPTSPKNKSWISEDDFYRPSREQPLESASDHPIASYRGTPGSRPGLHRHFSQEPRKNCSLGALDQACVPSPGRRQAQAAPSQGHKSFRVVHRRQMGLSNPFRGLMKLGTVERRGAMGIWKELFCELSPLEFRLYLSNEEHTCVENCSLLRCESVGPAHSDGRFELVFSGKKLALRASSQDEAEDWLDRVREALQKVRPQQEDEWVNVQYPDQPEEPPEAPQGCLSPSDLLSEPAALQGTQFDWSSAQVPEPDAIKESLLYLYMDRTWMPYIFSLSLEALKCFRIRNNEKMLSDSHGVETIRDILPDTSLGGPSFFKIITAKAVLKLQAGNAEEAALWRDLVRKVLASYLETAEEAVTLGGSLDENCQEVLKFATRENGFLLQYLVAIPMEKGLDSQGCFCAGCSRQIGFSFVRPKLCAFSGLYYCDICHQDDASVIPARIIHNWDLTKRPICRQALKFLTQIRAQPLINLQMVNASLYEHVERMHLIGRRREQLKLLGDYLGLCRSGALKELSKRLNHRNYLLESPHRFSVADLQQIADGVYEGFLKALIEFASQHVYHCDLCTQRGFICQICQHHDIIFPFEFDTTVRCAECKTVFHQSCQAVVKKGCPRCARRRKYQEQNIFA.

An RUN domain is found at 41–183; sequence TSEDGDANTM…LSFELSYKSA (143 aa). Disordered regions lie at residues 215 to 245, 277 to 303, and 360 to 422; these read QRKE…RRNQ, GSKS…EDSD, and PAQA…QAHD. Position 219 is a phosphoserine (Ser-219). Polar residues predominate over residues 389 to 404; it reads PVESTSGQQPSSTVSE. Phosphoserine occurs at positions 432 and 435. The interval 451 to 483 is disordered; that stretch reads SREQPLESASDHPIASYRGTPGSRPGLHRHFSQ. Ser-490 carries the post-translational modification Phosphoserine. The region spanning 534 to 625 is the PH 1 domain; that stretch reads GLMKLGTVER…WLDRVREALQ (92 aa). The short motif at 632–638 is the LIR element; that stretch reads EDEWVNV. The interval 654–1056 is interaction with RAB7A; that stretch reads CLSPSDLLSE…RKYQEQNIFA (403 aa). The region spanning 683–777 is the PH 2 domain; the sequence is DAIKESLLYL…WRDLVRKVLA (95 aa). Residues 986-1040 form a Phorbol-ester/DAG-type zinc finger; it reads QHVYHCDLCTQRGFICQICQHHDIIFPFEFDTTVRCAECKTVFHQSCQAVVKKGC.

Interacts (via N- and C-terminus) with RAB7A (GTP-bound form). Simultaneously interacts with RAB7A and ARL8B; bringing about clustering and fusion of late endosomes and lysosomes. Interacts (via RUN domain) with ARL8B (GTP-bound form); the interaction is required for PLEKHM1 localization to lysosomes and for ARL8B function in delivery and degradation of endocytic and autophagic cargo in lysosomes. PLEKHM1 and PLEKHM2 compete for interaction with ARL8B. Interacts with ARL8A; the interaction is weaker than with ARL8B. Interacts with VPS41, VPS11, VPS18, VPS33A and VPS39; indicative for an association with the HOPS complex; the interactions with, at least, VPS41, VPS11, VPS18 and VPS33A require ARL8B. Interacts with GABARAP, GABARAPL, GABARAPL2, MAP1LC3A, MAP1LC3B and MAP1LC3C. Interacts with PAFAH1B. Interacts (via N- and C-terminus) with NDEL1. Interacts (via C-terminus) with MAP3K7. Interacts (via N- and C-terminus) with FAM98A. Interacts (via C-terminus) with DEF8; this interaction is weak but increased in a RAB7A-dependent manner. In colon carcinoma and breast carcinoma cells, it interacts with sialyl-lex-positive protein. In terms of assembly, (Microbial infection) Interacts with Salmonella typhimurium sifA. In terms of tissue distribution, expressed in placenta, liver, prostate, thymus, spleen, ovary, colon, colon carcinoma and peripheral blood lymphocytes (PBL). Weakly expressed in brain, lung, kidney, and testis. No expression in heart, skeletal muscle, pancreas and small intestine. Predominantly expressed in the breast carcinoma cell line MCF-7.

The protein localises to the autolysosome membrane. It localises to the endosome membrane. Its subcellular location is the late endosome membrane. It is found in the lysosome membrane. Its function is as follows. Acts as a multivalent adapter protein that regulates Rab7-dependent and HOPS complex-dependent fusion events in the endolysosomal system and couples autophagic and the endocytic trafficking pathways. Acts as a dual effector of RAB7A and ARL8B that simultaneously binds these GTPases, bringing about clustering and fusion of late endosomes and lysosomes. Required for late stages of endolysosomal maturation, facilitating both endocytosis-mediated degradation of growth factor receptors and autophagosome clearance. Interaction with Arl8b is a crucial factor in the terminal maturation of autophagosomes and to mediate autophagosome-lysosome fusion. Positively regulates lysosome peripheral distribution and ruffled border formation in osteoclasts. May be involved in negative regulation of endocytic transport from early endosome to late endosome/lysosome implicating its association with Rab7. May have a role in sialyl-lex-mediated transduction of apoptotic signals. Involved in bone resorption. (Microbial infection) In case of infection contributes to Salmonella typhimurium pathogenesis by supporting the integrity of the Salmonella-containing vacuole (SCV) probably in concert with the HOPS complex and Rab7. This chain is Pleckstrin homology domain-containing family M member 1, found in Homo sapiens (Human).